The primary structure comprises 336 residues: MAASLRLLGAASGLRYWSRRLRPAAGSFAAVCSRSVASKTPVGFIGLGNMGNPMAKNLMKHGYPLIIYDVFPDACKEFQDAGEQVVSSPADVAEKADRIITMLPTSINAIEAYSGANGILKKVKKGSLLIDSSTIDPAVSKELAKEVEKMGAVFMDAPVSGGVGAARSGNLTFMVGGVEDEFAAAQELLGCMGSNVVYCGAVGTGQAAKICNNMLLAISMIGTAEAMNLGIRLGLDPKLLAKILNMSSGRCWSSDTYNPVPGVMDGVPSANNYQGGFGATLMAKDLGLAQDSATSTKSPILLGSLAHQIYRMMCAKGYSKKDFSSVFQFLREEETF.

Residues 1-36 (MAASLRLLGAASGLRYWSRRLRPAAGSFAAVCSRSV) constitute a mitochondrion transit peptide. 40 to 69 (TPVGFIGLGNMGNPMAKNLMKHGYPLIIYD) is an NAD(+) binding site. K60 and K76 each carry N6-acetyllysine; alternate. N6-succinyllysine; alternate occurs at positions 60 and 76. N6-succinyllysine is present on K95. Residues 103-104 (LP) and N108 each bind NAD(+). The residue at position 121 (K121) is an N6-acetyllysine. Residue T134 coordinates NAD(+). K141 carries the N6-succinyllysine modification. The residue at position 145 (K145) is an N6-acetyllysine. K149 is subject to N6-acetyllysine; alternate. K149 carries the N6-succinyllysine; alternate modification. Residue K209 is part of the active site. An N6-acetyllysine; alternate mark is found at K238 and K242. An N6-succinyllysine; alternate mark is found at K238 and K242. K284 is an NAD(+) binding site. At K297 the chain carries N6-succinyllysine. K321 is modified (N6-acetyllysine; alternate). An N6-succinyllysine; alternate modification is found at K321.

It belongs to the HIBADH-related family. 3-hydroxyisobutyrate dehydrogenase subfamily. As to quaternary structure, homodimer.

It localises to the mitochondrion. The catalysed reaction is 3-hydroxy-2-methylpropanoate + NAD(+) = 2-methyl-3-oxopropanoate + NADH + H(+). Its pathway is amino-acid degradation; L-valine degradation. The polypeptide is 3-hydroxyisobutyrate dehydrogenase, mitochondrial (HIBADH) (Pongo abelii (Sumatran orangutan)).